The following is a 373-amino-acid chain: Transaldolase (373 aa).

The Schiff-base intermediate with substrate role is filled by lysine 143.

The protein belongs to the transaldolase family. Type 2 subfamily.

The protein localises to the cytoplasm. The enzyme catalyses D-sedoheptulose 7-phosphate + D-glyceraldehyde 3-phosphate = D-erythrose 4-phosphate + beta-D-fructose 6-phosphate. It participates in carbohydrate degradation; pentose phosphate pathway; D-glyceraldehyde 3-phosphate and beta-D-fructose 6-phosphate from D-ribose 5-phosphate and D-xylulose 5-phosphate (non-oxidative stage): step 2/3. Functionally, transaldolase is important for the balance of metabolites in the pentose-phosphate pathway. This Mycobacterium marinum (strain ATCC BAA-535 / M) protein is Transaldolase.